We begin with the raw amino-acid sequence, 517 residues long: Shugoshin 1 (517 aa).

The stretch at 1–89 forms a coiled coil; it reads MAKERCQKRS…DVILQLRKEC (89 aa). The segment at 1 to 176 is necessary for interaction with PPP2CA and PPP2R1A; it reads MAKERCQKRS…DFDSGKVEST (176 aa). Disordered stretches follow at residues 107–136, 149–173, 267–317, and 334–427; these read QSEE…LSGK, PYQT…SGKV, PEQI…TLDG, and HPTP…QESP. A coiled-coil region spans residues 268–291; sequence EQIESKHKRARKRRAEQRRTKQRC. Residues 273–302 show a composition bias toward basic residues; it reads KHKRARKRRAEQRRTKQRCKSKSSLRSKGN. Polar residues predominate over residues 341–363; sequence KMNNGCNKETDSSNSEVSDLECS. Residues 379-390 show a composition bias toward basic and acidic residues; it reads RLRDYRESERAV. Serine 426 is modified (phosphoserine). A PXVXL/I motif motif is present at residues 441–445; that stretch reads PRVKI. A D-box motif is present at residues 447 to 455; that stretch reads KPSLPPKRR. Serine 497 is subject to Phosphoserine; by NEK2.

The protein belongs to the shugoshin family. In terms of assembly, interacts with PPP2CA (or PPP2CB), PPP2R1B, PPP2R5A, PPP2R5B, PPP2R5C, PPP2R5D, PPP2R5E, SET, LRRC59, RBM10 (or RBM5), RPL10A, RPL28, RPL7, RPL7A and RPLP1. Interaction with protein phosphatase 2A occurs most probably through direct binding to the regulatory B56 subunits: PPP2R1B, PPP2R5A, PPP2R5B, PPP2R5C, PPP2R5D, PPP2R5E. Interacts with PPP2R1A and NEK2. Interacts with CDCA8. In terms of processing, ubiquitinated and degraded during mitotic exit by APC/C-Cdh1. Phosphorylation by NEK2 is essential for chromosome congression in mitosis and for the proper attachment of spindle microtubule to the kinetochore. Phosphorylated by PLK1 and AUKRB. In terms of tissue distribution, ubiquitously expressed in proliferating cells. Moderately expressed in the oocytes.

The protein resides in the nucleus. The protein localises to the chromosome. Its subcellular location is the centromere. It localises to the kinetochore. It is found in the cytoplasm. The protein resides in the cytoskeleton. The protein localises to the spindle pole. Its subcellular location is the microtubule organizing center. It localises to the centrosome. It is found in the nucleus speckle. Plays a central role in chromosome cohesion during mitosis by preventing premature dissociation of cohesin complex from centromeres after prophase, when most of cohesin complex dissociates from chromosomes arms. May act by preventing phosphorylation of the STAG2 subunit of cohesin complex at the centromere, ensuring cohesin persistence at centromere until cohesin cleavage by ESPL1/separase at anaphase. Essential for proper chromosome segregation during mitosis and this function requires interaction with PPP2R1A. Its phosphorylated form is necessary for chromosome congression and for the proper attachment of spindle microtubule to the kinetochore. Necessary for kinetochore localization of PLK1 and CENPF. May play a role in the tension sensing mechanism of the spindle-assembly checkpoint by regulating PLK1 kinetochore affinity. Involved in centromeric enrichment of AUKRB in prometaphase. This Mus musculus (Mouse) protein is Shugoshin 1.